The sequence spans 286 residues: tRNA(Ile)-lysidine synthase (286 aa).

7 to 12 (SGGPDS) contributes to the ATP binding site.

The protein belongs to the tRNA(Ile)-lysidine synthase family.

The protein localises to the cytoplasm. It carries out the reaction cytidine(34) in tRNA(Ile2) + L-lysine + ATP = lysidine(34) in tRNA(Ile2) + AMP + diphosphate + H(+). Functionally, ligates lysine onto the cytidine present at position 34 of the AUA codon-specific tRNA(Ile) that contains the anticodon CAU, in an ATP-dependent manner. Cytidine is converted to lysidine, thus changing the amino acid specificity of the tRNA from methionine to isoleucine. The protein is tRNA(Ile)-lysidine synthase of Mycoplasmopsis pulmonis (strain UAB CTIP) (Mycoplasma pulmonis).